The sequence spans 377 residues: Alanine racemase (377 aa).

The Proton acceptor; specific for D-alanine role is filled by lysine 37. Lysine 37 carries the N6-(pyridoxal phosphate)lysine modification. Arginine 135 is a binding site for substrate. Tyrosine 271 serves as the catalytic Proton acceptor; specific for L-alanine. Methionine 319 is a substrate binding site.

It belongs to the alanine racemase family. The cofactor is pyridoxal 5'-phosphate.

The enzyme catalyses L-alanine = D-alanine. It functions in the pathway amino-acid biosynthesis; D-alanine biosynthesis; D-alanine from L-alanine: step 1/1. Catalyzes the interconversion of L-alanine and D-alanine. May also act on other amino acids. This chain is Alanine racemase (alr), found in Helicobacter pylori (strain J99 / ATCC 700824) (Campylobacter pylori J99).